The primary structure comprises 421 residues: Glutamate-1-semialdehyde 2,1-aminomutase (421 aa).

The residue at position 261 (Lys-261) is an N6-(pyridoxal phosphate)lysine.

Belongs to the class-III pyridoxal-phosphate-dependent aminotransferase family. HemL subfamily. Pyridoxal 5'-phosphate serves as cofactor.

Its subcellular location is the cytoplasm. It catalyses the reaction (S)-4-amino-5-oxopentanoate = 5-aminolevulinate. Its pathway is porphyrin-containing compound metabolism; protoporphyrin-IX biosynthesis; 5-aminolevulinate from L-glutamyl-tRNA(Glu): step 2/2. The protein is Glutamate-1-semialdehyde 2,1-aminomutase (hemL) of Thermoplasma acidophilum (strain ATCC 25905 / DSM 1728 / JCM 9062 / NBRC 15155 / AMRC-C165).